Here is a 212-residue protein sequence, read N- to C-terminus: ER lumen protein-retaining receptor 1 (212 aa).

Topologically, residues 1–4 are lumenal; that stretch reads MNLF. A helical membrane pass occupies residues 5–24; sequence RFLGDLSHLLAIILLLLKIW. At 25–32 the chain is on the cytoplasmic side; it reads KSRSCAGI. A helical membrane pass occupies residues 33 to 52; sequence SGKSQVLFAVVFTARYLDLF. The segment at 47–48 is interaction with the K-D-E-L motif on target proteins; the sequence is RY. The Lumenal segment spans residues 53–58; that stretch reads TNYISL. The chain crosses the membrane as a helical span at residues 59-79; the sequence is YNTCMKVVYIACSFTTVWMIY. Residues 80 to 92 lie on the Cytoplasmic side of the membrane; that stretch reads SKFKATYDGNHDT. The chain crosses the membrane as a helical span at residues 93-110; sequence FRVEFLVIPTAILAFLVN. Topologically, residues 111–116 are lumenal; sequence HDFTPL. A helical membrane pass occupies residues 117 to 135; that stretch reads EILWTFSIYLESVAILPQL. Over 136 to 149 the chain is Cytoplasmic; sequence FMVSKTGEAETITS. A helical membrane pass occupies residues 150–168; the sequence is HYLFALGVYRTLYLFNWIW. The tract at residues 159 to 169 is interaction with the K-D-E-L motif on target proteins; that stretch reads RTLYLFNWIWR. Residues 169 to 178 lie on the Lumenal side of the membrane; that stretch reads RYHFEGFFDL. The helical transmembrane segment at 179 to 199 threads the bilayer; that stretch reads IAIVAGLVQTVLYCDFFYLYI. Residues 200 to 212 lie on the Cytoplasmic side of the membrane; it reads TKVLKGKKLSLPA. Positions 204 to 207 are important for recycling of cargo proteins with the sequence motif K-D-E-L from the Golgi to the endoplasmic reticulum; the sequence is KGKK. Serine 209 carries the phosphoserine; by PKA modification.

It belongs to the ERD2 family. Upon ligand binding the receptor oligomerizes and interacts with components of the transport machinery such as ARFGAP1 and ARF1. Phosphorylation by PKA at Ser-209 is required for endoplasmic reticulum retention function.

It is found in the golgi apparatus membrane. Its subcellular location is the cytoplasmic vesicle. The protein localises to the COPI-coated vesicle membrane. The protein resides in the endoplasmic reticulum membrane. It localises to the endoplasmic reticulum-Golgi intermediate compartment membrane. Its function is as follows. Receptor for the C-terminal sequence motif K-D-E-L that is present on endoplasmic reticulum resident proteins and that mediates their recycling from the Golgi back to the endoplasmic reticulum. This chain is ER lumen protein-retaining receptor 1 (KDELR1), found in Bos taurus (Bovine).